The sequence spans 619 residues: P-granule-associated protein deps-1 (619 aa).

Positions 62 to 101 (NFDNIEEAKNLERRSKIPLKFGEVILWNESDCDHDKRIIL) are required for prg-1 binding. Composition is skewed to low complexity over residues 563-592 (SRAT…AATS) and 600-619 (GPSS…SSRV). The segment at 563-619 (SRATSARTTPAGSSIGSRSSIQSRASAATSVSSNRFVGPSSRRTPSGTPQSSTSSRV) is disordered.

Interacts (via N-terminus) with prg-1; the interaction is direct. May interact with edg-1. In terms of tissue distribution, expressed in germ cells.

Its subcellular location is the cytoplasmic granule. It is found in the cytoplasm. It localises to the perinuclear region. In terms of biological role, component of P-granules which is required for P-granule formation and integrity in adult germ cells. Promotes the accumulation of glh-1 mRNA and localization of pgl-1 to P-granules. Involved in RNA-mediated gene silencing (RNAi) in the germline. In particular, it is required for piwi-interacting RNA (piRNA) gene silencing and positively regulates the formation of secondary 22G-RNAs, which are RNA-dependent RNA polymerase-derived endo-siRNAs, typically 22 nucleotides in length with a 5'guanosine residue. Its role in RNAi may also be through positively regulating the expression of the dsRNA-binding protein rde-4. Plays a role in small RNA-directed transgenerational epigenetic inheritance. This chain is P-granule-associated protein deps-1, found in Caenorhabditis elegans.